A 463-amino-acid polypeptide reads, in one-letter code: Probable Xaa-Pro aminopeptidase pepP (463 aa).

Positions 259, 270, 393, and 433 each coordinate Mn(2+).

Belongs to the peptidase M24B family. The cofactor is Mn(2+).

The enzyme catalyses Release of any N-terminal amino acid, including proline, that is linked to proline, even from a dipeptide or tripeptide.. Catalyzes the removal of a penultimate prolyl residue from the N-termini of peptides. This is Probable Xaa-Pro aminopeptidase pepP (pepP) from Pyrenophora tritici-repentis (strain Pt-1C-BFP) (Wheat tan spot fungus).